Here is an 83-residue protein sequence, read N- to C-terminus: NAD(P)H-quinone oxidoreductase subunit L (83 aa).

2 helical membrane passes run 18–38 (ILAYALLGGLYLLVVPLALFF) and 53–73 (LLVYGLVFLFFPGMVVFAPFL).

The protein belongs to the complex I NdhL subunit family. In terms of assembly, NDH-1 can be composed of about 15 different subunits; different subcomplexes with different compositions have been identified which probably have different functions.

The protein resides in the cellular thylakoid membrane. The enzyme catalyses a plastoquinone + NADH + (n+1) H(+)(in) = a plastoquinol + NAD(+) + n H(+)(out). It catalyses the reaction a plastoquinone + NADPH + (n+1) H(+)(in) = a plastoquinol + NADP(+) + n H(+)(out). Functionally, NDH-1 shuttles electrons from an unknown electron donor, via FMN and iron-sulfur (Fe-S) centers, to quinones in the respiratory and/or the photosynthetic chain. The immediate electron acceptor for the enzyme in this species is believed to be plastoquinone. Couples the redox reaction to proton translocation, and thus conserves the redox energy in a proton gradient. Cyanobacterial NDH-1 also plays a role in inorganic carbon-concentration. This Parasynechococcus marenigrum (strain WH8102) protein is NAD(P)H-quinone oxidoreductase subunit L.